Here is a 134-residue protein sequence, read N- to C-terminus: Fluoride-specific ion channel FluC (134 aa).

4 consecutive transmembrane segments (helical) span residues 7 to 27, 38 to 58, 69 to 89, and 110 to 130; these read LAVAIGGSLGAMSRYLVTIMA, GTLLVNTLGSFLAGFFLIVLV, LFLFTGFLGAFTTFSSFAAES, and VGSLSMVFVGTLVAKYVLLGH. The Na(+) site is built by glycine 77 and threonine 80.

Belongs to the fluoride channel Fluc/FEX (TC 1.A.43) family.

Its subcellular location is the cell inner membrane. It catalyses the reaction fluoride(in) = fluoride(out). Its activity is regulated as follows. Na(+) is not transported, but it plays an essential structural role and its presence is essential for fluoride channel function. Functionally, fluoride-specific ion channel. Important for reducing fluoride concentration in the cell, thus reducing its toxicity. The protein is Fluoride-specific ion channel FluC of Legionella pneumophila (strain Lens).